Here is a 749-residue protein sequence, read N- to C-terminus: Adenosylcobalamin-dependent ribonucleoside-triphosphate reductase (749 aa).

An intrachain disulfide couples C124 to C427. The effector region-1 stretch occupies residues 152-163; that stretch reads SMPFSFMFDQLM. The effector region-2 stretch occupies residues 173–321; sequence TPNNVHQMPV…MGNMIGKTVV (149 aa). Catalysis depends on residues C416 and E418. Residues 573–634 are adenosylcobalamin-binding-1; sequence FHYARYLIQR…EPAFASAGEV (62 aa). Residues 693–734 are adenosylcobalamin-binding-2; sequence FKQAPKEPIDAATYDAKCQEITADVAEKFAAMTGNHDQKDIE.

Belongs to the class II ribonucleoside-triphosphate reductase family. In terms of assembly, monomer. Requires adenosylcob(III)alamin as cofactor.

It catalyses the reaction a 2'-deoxyribonucleoside 5'-triphosphate + [thioredoxin]-disulfide + H2O = a ribonucleoside 5'-triphosphate + [thioredoxin]-dithiol. With respect to regulation, allosterically regulated by ATP and dNTP. The polypeptide is Adenosylcobalamin-dependent ribonucleoside-triphosphate reductase (rtpR) (Levilactobacillus brevis (strain ATCC 367 / BCRC 12310 / CIP 105137 / JCM 1170 / LMG 11437 / NCIMB 947 / NCTC 947) (Lactobacillus brevis)).